The following is a 338-amino-acid chain: Ornithine carbamoyltransferase, catabolic (338 aa).

Carbamoyl phosphate is bound by residues 65–68, Q92, R116, and 143–146; these read STRT and HPTQ. Residues N175, D239, and 243 to 244 each bind L-ornithine; that span reads SM. Carbamoyl phosphate is bound by residues 280-281 and R325; that span reads CL.

The protein belongs to the aspartate/ornithine carbamoyltransferase superfamily. OTCase family.

It localises to the cytoplasm. The catalysed reaction is carbamoyl phosphate + L-ornithine = L-citrulline + phosphate + H(+). It functions in the pathway amino-acid degradation; L-arginine degradation via ADI pathway; carbamoyl phosphate from L-arginine: step 2/2. Reversibly catalyzes the transfer of the carbamoyl group from carbamoyl phosphate (CP) to the N(epsilon) atom of ornithine (ORN) to produce L-citrulline. The chain is Ornithine carbamoyltransferase, catabolic from Treponema denticola (strain ATCC 35405 / DSM 14222 / CIP 103919 / JCM 8153 / KCTC 15104).